A 186-amino-acid polypeptide reads, in one-letter code: Peptide deformylase (186 aa).

Residues Cys-99 and His-141 each coordinate Fe cation. The active site involves Glu-142. Position 145 (His-145) interacts with Fe cation.

It belongs to the polypeptide deformylase family. It depends on Fe(2+) as a cofactor.

It catalyses the reaction N-terminal N-formyl-L-methionyl-[peptide] + H2O = N-terminal L-methionyl-[peptide] + formate. Functionally, removes the formyl group from the N-terminal Met of newly synthesized proteins. Requires at least a dipeptide for an efficient rate of reaction. N-terminal L-methionine is a prerequisite for activity but the enzyme has broad specificity at other positions. The sequence is that of Peptide deformylase from Chlamydia pneumoniae (Chlamydophila pneumoniae).